A 229-amino-acid polypeptide reads, in one-letter code: MDAKIKPLRGGKPADARPEFQPAELDPSEFLAAAVQPDQPRPSRTEAEQAVKTLLAYIGENTGREGLLDTPRRVVEAYDELFQGYHQCPAEVLDRTFGETAGYDDFVLVRDIGFTSHCEHHVMPFYGKAHIAYTPVERVVGLSKLARLVEIFARRLQTQEHLTAQIAAAIDEVLKPRGVAVMIEAEHTCMSVRGIGKQGASTFTSRYTGMFRDNPAEQARFMSMIRSRG.

The segment at 1–26 (MDAKIKPLRGGKPADARPEFQPAELD) is disordered. Zn(2+)-binding residues include C118, H121, and C189.

Belongs to the GTP cyclohydrolase I family. Toroid-shaped homodecamer, composed of two pentamers of five dimers.

It catalyses the reaction GTP + H2O = 7,8-dihydroneopterin 3'-triphosphate + formate + H(+). It functions in the pathway cofactor biosynthesis; 7,8-dihydroneopterin triphosphate biosynthesis; 7,8-dihydroneopterin triphosphate from GTP: step 1/1. In Rhodopseudomonas palustris (strain BisB5), this protein is GTP cyclohydrolase 1.